We begin with the raw amino-acid sequence, 443 residues long: Putative F-box/FBD/LRR-repeat protein At5g22670 (443 aa).

Residues 10–56 enclose the F-box domain; that stretch reads QDSISLLPDDLLCRILSNLPTKVAVRTSVLSKRWKRFSLSVPLLEFN. LRR repeat units follow at residues 139-165, 166-191, 219-243, 275-300, and 325-353; these read SLRL…HLID, NIYP…NVSR, YGDI…SLRD, NFLL…TMSG, and YAVF…VLEL. Positions 361–412 constitute an FBD domain; the sequence is LLILSSSIPKCLRSSLEHVEIHTPISGAEAEMKLVKYFLENSAVLKKFTLQL.

In Arabidopsis thaliana (Mouse-ear cress), this protein is Putative F-box/FBD/LRR-repeat protein At5g22670.